Here is a 421-residue protein sequence, read N- to C-terminus: UDP-N-acetylglucosamine 1-carboxyvinyltransferase (421 aa).

22-23 (KN) contacts phosphoenolpyruvate. Arg93 contributes to the UDP-N-acetyl-alpha-D-glucosamine binding site. The active-site Proton donor is the Cys117. Cys117 carries the 2-(S-cysteinyl)pyruvic acid O-phosphothioketal modification. Residues 122–126 (RPVDL), Asp308, and Ile330 contribute to the UDP-N-acetyl-alpha-D-glucosamine site.

It belongs to the EPSP synthase family. MurA subfamily.

Its subcellular location is the cytoplasm. The enzyme catalyses phosphoenolpyruvate + UDP-N-acetyl-alpha-D-glucosamine = UDP-N-acetyl-3-O-(1-carboxyvinyl)-alpha-D-glucosamine + phosphate. The protein operates within cell wall biogenesis; peptidoglycan biosynthesis. Cell wall formation. Adds enolpyruvyl to UDP-N-acetylglucosamine. This chain is UDP-N-acetylglucosamine 1-carboxyvinyltransferase, found in Pseudomonas fluorescens (strain Pf0-1).